The following is a 57-amino-acid chain: Large ribosomal subunit protein bL32 (57 aa).

Residues 1 to 19 (MATPKRRMSRANTRSRRSQ) are compositionally biased toward basic residues. Residues 1-20 (MATPKRRMSRANTRSRRSQW) form a disordered region.

The protein belongs to the bacterial ribosomal protein bL32 family.

The protein is Large ribosomal subunit protein bL32 of Mycobacterium marinum (strain ATCC BAA-535 / M).